Reading from the N-terminus, the 320-residue chain is Polyisoprenyl-teichoic acid--peptidoglycan teichoic acid transferase TagU (320 aa).

The Cytoplasmic segment spans residues 1–15; that stretch reads MVSRTERKQHKKRRK. A helical; Signal-anchor for type II membrane protein transmembrane segment spans residues 16–36; that stretch reads WPFWLGGILLVLLLLISGGIF. Residues 37–320 lie on the Extracellular side of the membrane; it reads LIYNQVGAVV…SEITGHMQEQ (284 aa).

This sequence belongs to the LytR/CpsA/Psr (LCP) family.

The protein localises to the cell membrane. Its pathway is cell wall biogenesis. May catalyze the final step in cell wall teichoic acid biosynthesis, the transfer of the anionic cell wall polymers (APs) from their lipid-linked precursor to the cell wall peptidoglycan (PG). This is Polyisoprenyl-teichoic acid--peptidoglycan teichoic acid transferase TagU from Oceanobacillus iheyensis (strain DSM 14371 / CIP 107618 / JCM 11309 / KCTC 3954 / HTE831).